Consider the following 203-residue polypeptide: uncharacterized protein (203 aa).

The disordered stretch occupies residues 174-203; it reads LASSKNPRARSPGLDPLGSSETLWSHRGGH.

This is an uncharacterized protein from Homo sapiens (Human).